Reading from the N-terminus, the 211-residue chain is MLTIALSKGRILDDTLPLLAAAGIVPSENPDKSRKLIIPTSLPDVRLLIVRATDVPTYVEHGAADLGVAGKDVLMEYGGQGLYEPLDLRIANCKLMTAGAIGAPEPKGRLRVATKFVNVAKRYYAEQGRQVDVIKLYGSMELAPLVGLADKIIDVVDTGNTLRANGLEPQELIATISSRLVVNKASMKMQHGRIQSLIDTLRDAVEARHRH.

It belongs to the ATP phosphoribosyltransferase family. Short subfamily. In terms of assembly, heteromultimer composed of HisG and HisZ subunits.

It localises to the cytoplasm. The enzyme catalyses 1-(5-phospho-beta-D-ribosyl)-ATP + diphosphate = 5-phospho-alpha-D-ribose 1-diphosphate + ATP. It functions in the pathway amino-acid biosynthesis; L-histidine biosynthesis; L-histidine from 5-phospho-alpha-D-ribose 1-diphosphate: step 1/9. Its function is as follows. Catalyzes the condensation of ATP and 5-phosphoribose 1-diphosphate to form N'-(5'-phosphoribosyl)-ATP (PR-ATP). Has a crucial role in the pathway because the rate of histidine biosynthesis seems to be controlled primarily by regulation of HisG enzymatic activity. The protein is ATP phosphoribosyltransferase of Pseudomonas aeruginosa (strain UCBPP-PA14).